The following is a 129-amino-acid chain: Small ribosomal subunit protein uS11 (129 aa).

The protein belongs to the universal ribosomal protein uS11 family. Part of the 30S ribosomal subunit. Interacts with proteins S7 and S18. Binds to IF-3.

Its function is as follows. Located on the platform of the 30S subunit, it bridges several disparate RNA helices of the 16S rRNA. Forms part of the Shine-Dalgarno cleft in the 70S ribosome. The polypeptide is Small ribosomal subunit protein uS11 (Rhodopseudomonas palustris (strain BisB18)).